A 195-amino-acid chain; its full sequence is Imidazoleglycerol-phosphate dehydratase (195 aa).

This sequence belongs to the imidazoleglycerol-phosphate dehydratase family.

The protein resides in the cytoplasm. It carries out the reaction D-erythro-1-(imidazol-4-yl)glycerol 3-phosphate = 3-(imidazol-4-yl)-2-oxopropyl phosphate + H2O. Its pathway is amino-acid biosynthesis; L-histidine biosynthesis; L-histidine from 5-phospho-alpha-D-ribose 1-diphosphate: step 6/9. In Polynucleobacter asymbioticus (strain DSM 18221 / CIP 109841 / QLW-P1DMWA-1) (Polynucleobacter necessarius subsp. asymbioticus), this protein is Imidazoleglycerol-phosphate dehydratase.